We begin with the raw amino-acid sequence, 449 residues long: Putative F-box/FBD/LRR-repeat protein At3g49480 (449 aa).

Positions 11 to 59 (EDRISSLPDDLLVKILLCVPTKDAAATTFLSKRWRFVWRMLPRLNYIET) constitute an F-box domain. LRR repeat units lie at residues 60–91 (TSDVKSNTVWWFLEESFRFHKAPLLERLWIDL), 153–180 (RLTLSDKILVDVPCQVSLPSLRELDLFC), 182–206 (VYKDEDSHVKLLSSCPVLKHLKVTR), 235–260 (FREDSDMSDPFLVTDTPNLLSLHIFD), 275–302 (VTVVTDELFPSEKFMRPLSSVKYLALSP), and 327–352 (SEYDLLESLLVLLSKCSKLKVFLVDS). The FBD domain occupies 364–412 (WNQPSSIPRCLSSHLEIFEWDGYVGREDEKKIIRYILENSKYLKTAGIS).

This Arabidopsis thaliana (Mouse-ear cress) protein is Putative F-box/FBD/LRR-repeat protein At3g49480.